We begin with the raw amino-acid sequence, 266 residues long: Zinc transport system ATP-binding protein TroB (266 aa).

The 233-residue stretch at 11–243 (VQVDDLTLAY…YVQRAYGGRI (233 aa)) folds into the ABC transporter domain. ATP is bound at residue 43 to 50 (GPNGAGKS).

Belongs to the ABC transporter superfamily.

Functionally, part of an ATP-driven transport system TroABCD for zinc. This Treponema pallidum (strain Nichols) protein is Zinc transport system ATP-binding protein TroB (troB).